A 364-amino-acid polypeptide reads, in one-letter code: tRNA-specific 2-thiouridylase MnmA 1 (364 aa).

Residues Gly-10–Ser-17 and Met-36 each bind ATP. Cys-106 acts as the Nucleophile in catalysis. Cys-106 and Cys-204 are joined by a disulfide. Gly-130 provides a ligand contact to ATP. An interaction with tRNA region spans residues Lys-154–Gln-156. Cys-204 serves as the catalytic Cysteine persulfide intermediate. The segment at Arg-310–Tyr-311 is interaction with tRNA.

The protein belongs to the MnmA/TRMU family.

It localises to the cytoplasm. The enzyme catalyses S-sulfanyl-L-cysteinyl-[protein] + uridine(34) in tRNA + AH2 + ATP = 2-thiouridine(34) in tRNA + L-cysteinyl-[protein] + A + AMP + diphosphate + H(+). Catalyzes the 2-thiolation of uridine at the wobble position (U34) of tRNA, leading to the formation of s(2)U34. This Caldanaerobacter subterraneus subsp. tengcongensis (strain DSM 15242 / JCM 11007 / NBRC 100824 / MB4) (Thermoanaerobacter tengcongensis) protein is tRNA-specific 2-thiouridylase MnmA 1.